Consider the following 497-residue polypeptide: Serine/threonine-protein kinase cst-1 (497 aa).

Residues 1-27 (MPPSTDSSRRNSEEGSSDGFKLDSSAL) form a disordered region. Residues 35–286 (FDIVGKLGEG…ALRLCEHTFI (252 aa)) form the Protein kinase domain. ATP is bound by residues 41–49 (LGEGSYGSV) and K64. D154 functions as the Proton acceptor in the catalytic mechanism. Residues 367–416 (KSAYIPGSSKNGNSPRVQPPGHTASASDPSKNQPFAQDGTGPNFQLGTSE) are disordered. The span at 390–416 (ASASDPSKNQPFAQDGTGPNFQLGTSE) shows a compositional bias: polar residues. In terms of domain architecture, SARAH spans 446–493 (FEFLRNITLDELIRRKESLDSEMEEEIRELQRRYKTKRQPILDVIEIK). Residues 450 to 486 (RNITLDELIRRKESLDSEMEEEIRELQRRYKTKRQPI) adopt a coiled-coil conformation.

This sequence belongs to the protein kinase superfamily. STE Ser/Thr protein kinase family. STE20 subfamily. In terms of assembly, interacts with rsf-1 (via SARAH domain); the interaction is required for the phosphorylation of cst-1. Requires Mg(2+) as cofactor. Post-translationally, proteolytically cleaved by caspase-3 during apoptosis which results in kinase activation. In terms of processing, phosphorylated. Widely expressed in epidermal cells.

It catalyses the reaction L-seryl-[protein] + ATP = O-phospho-L-seryl-[protein] + ADP + H(+). The enzyme catalyses L-threonyl-[protein] + ATP = O-phospho-L-threonyl-[protein] + ADP + H(+). Its function is as follows. Serine/threonine-protein kinase which extends lifespan and delays tissue aging, probably by activating daf-16. In Caenorhabditis elegans, this protein is Serine/threonine-protein kinase cst-1.